Reading from the N-terminus, the 504-residue chain is MEEFQGYLELDRFRQHDFLYPLIFREYSYALAHGHGLNRYMLLENIGYDNKSSLLIVKRLITTMYHQNYLIISANDSKQNPFFGYNKNLHSKILSEGFAIIVEIPFYLRLISSLEGAEIVRFYNLRSIHSIFPFLEEKFPHLNYSADILIPYPAHLEILVQTLRYRVKDASYLHLLRFFLHEYSNCNSLIITNKSISIFSKSNPRFFLFLYNSYICEYESIFLFLRNQSSHLRLTSSGVLFERLCLYRKIEHFAEVFANDFPVIPCFLKDPFMHYVRYQGKSILASKDTPLLMNKWKSYLVNLWQCHFDVWSHAASIRINQLSKHSLDFLSYFSSVRRNPAVVRNQMLENSFLLNNAPNKLDTIVPIIPLIGSLAKAKFCNAVGHPISKLTRADLSDFEIINRFLHICRNLSHYYSGSSKKKNMYRIKYILRLSCVKTLARKHKSTARAFLKRVDSEFFQEFFTEEGGFISLIFPRASFALRRLYSGRVWYLDIIFINGLSNHE.

It belongs to the intron maturase 2 family. MatK subfamily.

It localises to the plastid. The protein localises to the chloroplast. Usually encoded in the trnK tRNA gene intron. Probably assists in splicing its own and other chloroplast group II introns. The protein is Maturase K of Quercus gemelliflora (Pasang hiris).